A 246-amino-acid chain; its full sequence is 4-hydroxy-tetrahydrodipicolinate reductase (246 aa).

NAD(+)-binding positions include 7–12, 84–86, and 108–111; these read GATGRT, GTT, and ASNF. His-140 acts as the Proton donor/acceptor in catalysis. (S)-2,3,4,5-tetrahydrodipicolinate is bound at residue His-141. Lys-144 acts as the Proton donor in catalysis. A (S)-2,3,4,5-tetrahydrodipicolinate-binding site is contributed by 150 to 151; it reads GT.

It belongs to the DapB family.

The protein localises to the cytoplasm. It catalyses the reaction (S)-2,3,4,5-tetrahydrodipicolinate + NAD(+) + H2O = (2S,4S)-4-hydroxy-2,3,4,5-tetrahydrodipicolinate + NADH + H(+). The enzyme catalyses (S)-2,3,4,5-tetrahydrodipicolinate + NADP(+) + H2O = (2S,4S)-4-hydroxy-2,3,4,5-tetrahydrodipicolinate + NADPH + H(+). The protein operates within amino-acid biosynthesis; L-lysine biosynthesis via DAP pathway; (S)-tetrahydrodipicolinate from L-aspartate: step 4/4. Catalyzes the conversion of 4-hydroxy-tetrahydrodipicolinate (HTPA) to tetrahydrodipicolinate. This is 4-hydroxy-tetrahydrodipicolinate reductase from Natronomonas pharaonis (strain ATCC 35678 / DSM 2160 / CIP 103997 / JCM 8858 / NBRC 14720 / NCIMB 2260 / Gabara) (Halobacterium pharaonis).